The primary structure comprises 655 residues: SRSF protein kinase 1 (655 aa).

A disordered region spans residues 1 to 57 (MERKVLALQARKKRTKAKKDKAQRKSETQHRGSAPHSESDLPEQEEEILGSDDDEQE). The span at 10-22 (ARKKRTKAKKDKA) shows a compositional bias: basic residues. A compositionally biased stretch (acidic residues) spans 40–57 (DLPEQEEEILGSDDDEQE). Ser-51 is subject to Phosphoserine; by CK2. In terms of domain architecture, Protein kinase spans 80–653 (YHVIRKLGWG…AAECLRHPWL (574 aa)). Residues 86–94 (LGWGHFSTV), Lys-109, and 166–168 (EVL) contribute to the ATP site. Residue Asp-213 is the Proton acceptor of the active site. Disordered stretches follow at residues 238-341 (WQRS…QDQT) and 397-417 (FLSSQNGDSSTSQETDSCTPI). Over residues 265-276 (KNKKKKLKKKQK) the composition is skewed to basic residues. 2 stretches are compositionally biased toward basic and acidic residues: residues 277–288 (RQAELLEKRMQE) and 304–318 (NKQEESESPVERPLK). Phosphoserine is present on residues Ser-309, Ser-311, and Ser-333. The residue at position 555 (Ser-555) is a Phosphoserine; by CK2.

The protein belongs to the protein kinase superfamily. CMGC Ser/Thr protein kinase family. As to quaternary structure, monomer. Isoform 2 is found in a multisubunit complex containing seven proteins, named toposome, which separates entangled circular chromatin DNA during chromosome segregation. Isoform 2 interacts with DNAJC8 and AHSA1/AHA1 and this mediates formation of a complex with the Hsp70 /Hsp90 machinery. Isoform 1 is found in a complex with: DHX9, MOV10, MATR3, HNRNPU, NCL, DDX21, HSD17B4, PABPC1, HNRNPM, IGF2BP1, SYNCRIP, RPL3, VIM, YBX1, NPM1, HNRNPA2B1, HNRNPC, RPLP0, RPL7A and RALY. Isoform 2 binds to IGF2BP1, SYNCRIP, HNRNPA2B1 and HNRNPC. Isoform 1 and isoform 2 interact with SAFB which inhibits its activity. Isoform 2 interacts with SAFB2 which inhibits its activity. (Microbial infection) Isoform 2 interacts with HHV-1 ICP27 protein. It depends on Mg(2+) as a cofactor. Isoform 2 is predominantly expressed in the testis but is also present at lower levels in heart, ovary, small intestine, liver, kidney, pancreas and skeletal muscle. Isoform 1 is only seen in the testis, at lower levels than isoform 2. Highly expressed in different erythroid and lymphoid cell lines, with isoform 2 being far more abundant than isoform 1.

The protein resides in the cytoplasm. The protein localises to the nucleus. It localises to the nucleus matrix. Its subcellular location is the microsome. It is found in the nucleoplasm. The protein resides in the nucleus speckle. The protein localises to the chromosome. The catalysed reaction is L-seryl-[protein] + ATP = O-phospho-L-seryl-[protein] + ADP + H(+). The enzyme catalyses L-threonyl-[protein] + ATP = O-phospho-L-threonyl-[protein] + ADP + H(+). With respect to regulation, activated by phosphorylation on Ser-51 and Ser-555. Serine/arginine-rich protein-specific kinase which specifically phosphorylates its substrates at serine residues located in regions rich in arginine/serine dipeptides, known as RS domains and is involved in the phosphorylation of SR splicing factors and the regulation of splicing. Plays a central role in the regulatory network for splicing, controlling the intranuclear distribution of splicing factors in interphase cells and the reorganization of nuclear speckles during mitosis. Can influence additional steps of mRNA maturation, as well as other cellular activities, such as chromatin reorganization in somatic and sperm cells and cell cycle progression. Isoform 2 phosphorylates SFRS2, ZRSR2, LBR and PRM1. Isoform 2 phosphorylates SRSF1 using a directional (C-terminal to N-terminal) and a dual-track mechanism incorporating both processive phosphorylation (in which the kinase stays attached to the substrate after each round of phosphorylation) and distributive phosphorylation steps (in which the kinase and substrate dissociate after each phosphorylation event). The RS domain of SRSF1 binds first to a docking groove in the large lobe of the kinase domain of SRPK1. This induces certain structural changes in SRPK1 and/or RRM2 domain of SRSF1, allowing RRM2 to bind the kinase and initiate phosphorylation. The cycles continue for several phosphorylation steps in a processive manner (steps 1-8) until the last few phosphorylation steps (approximately steps 9-12). During that time, a mechanical stress induces the unfolding of the beta-4 motif in RRM2, which then docks at the docking groove of SRPK1. This also signals RRM2 to begin to dissociate, which facilitates SRSF1 dissociation after phosphorylation is completed. Isoform 2 can mediate hepatitis B virus (HBV) core protein phosphorylation. It plays a negative role in the regulation of HBV replication through a mechanism not involving the phosphorylation of the core protein but by reducing the packaging efficiency of the pregenomic RNA (pgRNA) without affecting the formation of the viral core particles. Isoform 1 and isoform 2 can induce splicing of exon 10 in MAPT/TAU. The ratio of isoform 1/isoform 2 plays a decisive role in determining cell fate in K-562 leukaemic cell line: isoform 2 favors proliferation where as isoform 1 favors differentiation. This Homo sapiens (Human) protein is SRSF protein kinase 1.